The chain runs to 375 residues: E3 ubiquitin-protein ligase RNF34 (375 aa).

The FYVE-type zinc finger occupies 56 to 107 (EGPNIVCKACGLSFSVFRKKHVCCDCKKDFCSVCSVLQENLRRCSTCHLLQE). Positions 115 to 134 (LMRLKVKDLRQYLILRNIPI) constitute an SAP 1 domain. The residue at position 169 (S169) is a Phosphoserine. A disordered region spans residues 202-250 (RTLGSGALAQEPSEIASANTEDDEDDDDDDDDDDDDDEENLEDRTPGLT). Positions 221–242 (TEDDEDDDDDDDDDDDDDEENL) are enriched in acidic residues. Phosphoserine occurs at positions 257 and 259. In terms of domain architecture, SAP 2 spans 267 to 281 (VEGMSVRQLKEILAR). An RING-type zinc finger spans residues 328 to 363 (CRICMDAVIDCVLLECGHMVTCTKCGKRMSECPICR).

In terms of assembly, interacts with CASP8 and CASP10. Interacts with p53/TP53; involved in p53/TP53 ubiquitination. Interacts (via RING-type zinc finger) with MDM2; the interaction stabilizes MDM2. Interacts (via RING-type zinc finger) with PPARGC1A. Interacts with NOD1. Autoubiquitinated (in vitro). In terms of processing, proteolytically cleaved by caspases upon induction of apoptosis by TNF.

It is found in the cell membrane. It localises to the endomembrane system. Its subcellular location is the nucleus. The protein resides in the nucleus speckle. The protein localises to the cytoplasm. It is found in the cytosol. It catalyses the reaction S-ubiquitinyl-[E2 ubiquitin-conjugating enzyme]-L-cysteine + [acceptor protein]-L-lysine = [E2 ubiquitin-conjugating enzyme]-L-cysteine + N(6)-ubiquitinyl-[acceptor protein]-L-lysine.. Its pathway is protein modification; protein ubiquitination. In terms of biological role, E3 ubiquitin-protein ligase that regulates several biological processes through the ubiquitin-mediated proteasomal degradation of various target proteins. Ubiquitinates the caspases CASP8 and CASP10, promoting their proteasomal degradation, to negatively regulate cell death downstream of death domain receptors in the extrinsic pathway of apoptosis. May mediate 'Lys-48'-linked polyubiquitination of RIPK1 and its subsequent proteasomal degradation thereby indirectly regulating the tumor necrosis factor-mediated signaling pathway. Negatively regulates p53/TP53 through its direct ubiquitination and targeting to proteasomal degradation. Indirectly, may also negatively regulate p53/TP53 through ubiquitination and degradation of SFN. Mediates PPARGC1A proteasomal degradation probably through ubiquitination thereby indirectly regulating the metabolism of brown fat cells. Possibly involved in innate immunity, through 'Lys-48'-linked polyubiquitination of NOD1 and its subsequent proteasomal degradation. The polypeptide is E3 ubiquitin-protein ligase RNF34 (RNF34) (Bos taurus (Bovine)).